Reading from the N-terminus, the 439-residue chain is Lipid-A-disaccharide synthase (439 aa).

The protein belongs to the LpxB family.

It carries out the reaction a lipid X + a UDP-2-N,3-O-bis[(3R)-3-hydroxyacyl]-alpha-D-glucosamine = a lipid A disaccharide + UDP + H(+). Its pathway is bacterial outer membrane biogenesis; LPS lipid A biosynthesis. In terms of biological role, condensation of UDP-2,3-diacylglucosamine and 2,3-diacylglucosamine-1-phosphate to form lipid A disaccharide, a precursor of lipid A, a phosphorylated glycolipid that anchors the lipopolysaccharide to the outer membrane of the cell. The sequence is that of Lipid-A-disaccharide synthase from Xanthomonas axonopodis pv. citri (strain 306).